The following is a 158-amino-acid chain: NADH-quinone oxidoreductase subunit B (158 aa).

The [4Fe-4S] cluster site is built by C37, C38, C102, and C132.

The protein belongs to the complex I 20 kDa subunit family. In terms of assembly, NDH-1 is composed of 14 different subunits. Subunits NuoB, C, D, E, F, and G constitute the peripheral sector of the complex. It depends on [4Fe-4S] cluster as a cofactor.

It localises to the cell inner membrane. It catalyses the reaction a quinone + NADH + 5 H(+)(in) = a quinol + NAD(+) + 4 H(+)(out). Its function is as follows. NDH-1 shuttles electrons from NADH, via FMN and iron-sulfur (Fe-S) centers, to quinones in the respiratory chain. Couples the redox reaction to proton translocation (for every two electrons transferred, four hydrogen ions are translocated across the cytoplasmic membrane), and thus conserves the redox energy in a proton gradient. This chain is NADH-quinone oxidoreductase subunit B, found in Hydrogenovibrio crunogenus (strain DSM 25203 / XCL-2) (Thiomicrospira crunogena).